The following is a 209-amino-acid chain: Chaperone protein TorD (209 aa).

Belongs to the TorD/DmsD family. TorD subfamily.

Its subcellular location is the cytoplasm. In terms of biological role, involved in the biogenesis of TorA. Acts on TorA before the insertion of the molybdenum cofactor and, as a result, probably favors a conformation of the apoenzyme that is competent for acquiring the cofactor. The chain is Chaperone protein TorD from Salmonella bongori (strain ATCC 43975 / DSM 13772 / NCTC 12419).